Reading from the N-terminus, the 136-residue chain is Snaclec rhodocytin subunit alpha (136 aa).

Intrachain disulfides connect Cys-5-Cys-16, Cys-33-Cys-131, and Cys-106-Cys-123. One can recognise a C-type lectin domain in the interval 12-132; that stretch reads YDQHCYQAFN…CEQMHAFVCK (121 aa).

It belongs to the snaclec family. Dimer (non-covalently linked) of heterodimers of subunits alpha and beta (disulfide-linked). In terms of tissue distribution, expressed by the venom gland.

The protein resides in the secreted. In terms of biological role, elicits platelet aggregation by the binding to the C-type lectin domain family 1 member B (CLEC1B/CLEC2). Binding leads to tyrosine phosphorylation in the cytoplasmic tail of CLEC1B, which promotes the binding of spleen tyrosine kinase (Syk), subsequent activation of PLC-gamma-2, and platelet activation and aggregation. Binding to GPIbalpha (GP1BA) and alpha-2/beta-1 (ITGA2/ITGB1) may also induce aggregation, but this is controversial. The protein is Snaclec rhodocytin subunit alpha of Calloselasma rhodostoma (Malayan pit viper).